The chain runs to 138 residues: Basic phospholipase A2 trimucrotoxin (138 aa).

Positions 1-16 (MRTLWIVAVLLLGVEG) are cleaved as a signal peptide. 7 disulfide bridges follow: Cys-42–Cys-131, Cys-44–Cys-60, Cys-59–Cys-111, Cys-65–Cys-138, Cys-66–Cys-104, Cys-73–Cys-97, and Cys-91–Cys-102. Positions 43, 45, and 47 each coordinate Ca(2+). His-63 is a catalytic residue. Asp-64 contacts Ca(2+). Asp-105 is an active-site residue.

The protein belongs to the phospholipase A2 family. Group II subfamily. D49 sub-subfamily. Homodimer. Ca(2+) is required as a cofactor. Expressed by the venom gland.

The protein localises to the secreted. It catalyses the reaction a 1,2-diacyl-sn-glycero-3-phosphocholine + H2O = a 1-acyl-sn-glycero-3-phosphocholine + a fatty acid + H(+). Functionally, snake venom phospholipase A2 (PLA2) that displays edema-inducing activities, as well as presynaptic neurotoxicity and low myotoxicity. PLA2 catalyzes the calcium-dependent hydrolysis of the 2-acyl groups in 3-sn-phosphoglycerides. In Protobothrops mucrosquamatus (Taiwan habu), this protein is Basic phospholipase A2 trimucrotoxin.